The primary structure comprises 209 residues: Uridine kinase (209 aa).

Residue 16–23 participates in ATP binding; the sequence is GGSGSGKT.

This sequence belongs to the uridine kinase family.

It is found in the cytoplasm. The catalysed reaction is uridine + ATP = UMP + ADP + H(+). It carries out the reaction cytidine + ATP = CMP + ADP + H(+). Its pathway is pyrimidine metabolism; CTP biosynthesis via salvage pathway; CTP from cytidine: step 1/3. It participates in pyrimidine metabolism; UMP biosynthesis via salvage pathway; UMP from uridine: step 1/1. In Lactiplantibacillus plantarum (strain ATCC BAA-793 / NCIMB 8826 / WCFS1) (Lactobacillus plantarum), this protein is Uridine kinase.